Consider the following 394-residue polypeptide: Proliferation-associated protein 2G4 (394 aa).

Residue Ser2 is modified to N-acetylserine. The residue at position 2 (Ser2) is a Phosphoserine. Residues 2-48 are necessary for nucleolar localization; the sequence is SGEDEQQEQTIAEDLVVTKYKMGGDIANRVLRSLVEASSSGVSVLSL. The segment at 46-54 is RNA-binding; the sequence is LSLCEKGDA. Lys298 is covalently cross-linked (Glycyl lysine isopeptide (Lys-Gly) (interchain with G-Cter in SUMO2)). The necessary for nucleolar localization stretch occupies residues 301–394; the sequence is LLQPFNVLYE…ETLEENGAGD (94 aa). Ser335 carries the phosphoserine modification. Positions 358–394 are disordered; that stretch reads LQSSASRKTQKKKKKKASKTVENATSGETLEENGAGD. A Phosphoserine; by PKC/PRKCD modification is found at Ser361. The tract at residues 361–375 is interaction with RNA; the sequence is SASRKTQKKKKKKAS. The segment covering 365–375 has biased composition (basic residues); sequence KTQKKKKKKAS. Thr366 and Thr386 each carry phosphothreonine.

Belongs to the peptidase M24 family. As to quaternary structure, isoform 2 interacts with the cytoplasmic domain of non-phosphorylated ERBB3; the interaction requires PKC activity. Interacts with AR. Treatment with HRG leads to dissociation from ERBB3 and increases association with AR. Interacts with nucleolin/NCL. Component of a ribonucleoprotein complex containing at least PA2G4, NCL, TOP1, PABPC2, RPLP0, acetylated histone H1 (HIST1H1A or H1F1), histone H1 2/4, RPL4, RPL8, RPL15, RPL18, RPL18A, RPL21, RPL11, RPL12, RPL28, RPL27, RPLP2 and RPL24. Interacts with HDAC2. Interacts with RB1; the interaction is enhanced upon PA2G4 dephosphorylation. Interacts with AKT1. Isoform 1 and isoform 2 interact with RNF20. Isoform 2 interacts with HUWE1. Interacts with DNAJC21. Post-translationally, phosphorylated on serine and threonine residues. Phosphorylation is enhanced by HRG treatment. Basal phosphorylation is PKC-dependent and HRG-induced phosphorylation is predominantly PKC-independent. Phosphorylation at Ser-361 by PKC/PRKCD regulates its nucleolar localization. In terms of processing, isoform 2 is polyubiquitinated, leading to proteasomal degradation and phosphorylation by PKC/PRKCD enhances polyubiquitination. In terms of tissue distribution, widely expressed.

The protein resides in the cytoplasm. It is found in the nucleus. Its subcellular location is the nucleolus. May play a role in a ERBB3-regulated signal transduction pathway. Seems be involved in growth regulation. Acts a corepressor of the androgen receptor (AR) and is regulated by the ERBB3 ligand neuregulin-1/heregulin (HRG). Inhibits transcription of some E2F1-regulated promoters, probably by recruiting histone acetylase (HAT) activity. Binds RNA. Associates with 28S, 18S and 5.8S mature rRNAs, several rRNA precursors and probably U3 small nucleolar RNA. May be involved in regulation of intermediate and late steps of rRNA processing. May be involved in ribosome assembly. Mediates cap-independent translation of specific viral IRESs (internal ribosomal entry site). Together with PTBP1 is required for the translation initiation on the foot-and-mouth disease virus (FMDV) IRES. Regulates cell proliferation, differentiation, and survival. Isoform 1 suppresses apoptosis whereas isoform 2 promotes cell differentiation. This Mus musculus (Mouse) protein is Proliferation-associated protein 2G4 (Pa2g4).